Here is a 75-residue protein sequence, read N- to C-terminus: Dermaseptin-SP3 (75 aa).

Positions 1-22 (MAFLKKSLFLVLFLGLVSLSMC) are cleaved as a signal peptide. A propeptide spanning residues 23–45 (EEEKRENEVEEEQEDDEQSELRR) is cleaved from the precursor. Proline amide is present on proline 72. A propeptide spanning residues 74 to 75 (EQ) is cleaved from the precursor.

Belongs to the frog skin active peptide (FSAP) family. Dermaseptin subfamily. Expressed by the skin glands.

The protein resides in the secreted. The protein localises to the target cell membrane. In terms of biological role, antimicrobial peptide with activity against Gram-positive and Gram-negative bacteria and fungi. Has been tested against E.coli (MIC=47.50-128 uM), S.aureus (MIC=189.98-512 uM), K.pneumoniae (MIC&gt;189.98 uM) and C.albicans (MIC&gt;189.98 uM). Probably acts by disturbing membrane functions with its alpha-helical amphipathic structure. May penetrate bacterial membranes, but stay at the mammalian membrane surface. Shows a very weak hemolytic activity. The sequence is that of Dermaseptin-SP3 from Agalychnis spurrelli (Gliding leaf frog).